A 111-amino-acid polypeptide reads, in one-letter code: uncharacterized protein (111 aa).

The helical transmembrane segment at 20–39 (PVDTTGLIFFAVFASSFVLY) threads the bilayer.

It is found in the membrane. This is an uncharacterized protein from Saccharomyces cerevisiae (strain ATCC 204508 / S288c) (Baker's yeast).